We begin with the raw amino-acid sequence, 245 residues long: 3-deoxy-manno-octulosonate cytidylyltransferase (245 aa).

This sequence belongs to the KdsB family.

The protein localises to the cytoplasm. The enzyme catalyses 3-deoxy-alpha-D-manno-oct-2-ulosonate + CTP = CMP-3-deoxy-beta-D-manno-octulosonate + diphosphate. It functions in the pathway nucleotide-sugar biosynthesis; CMP-3-deoxy-D-manno-octulosonate biosynthesis; CMP-3-deoxy-D-manno-octulosonate from 3-deoxy-D-manno-octulosonate and CTP: step 1/1. The protein operates within bacterial outer membrane biogenesis; lipopolysaccharide biosynthesis. In terms of biological role, activates KDO (a required 8-carbon sugar) for incorporation into bacterial lipopolysaccharide in Gram-negative bacteria. The protein is 3-deoxy-manno-octulosonate cytidylyltransferase of Acaryochloris marina (strain MBIC 11017).